Consider the following 83-residue polypeptide: Lipolysis-activating peptide 1-alpha chain (83 aa).

The signal sequence occupies residues 1–21 (MNIILFYFMPILISLPGLLAS). The LCN-type CS-alpha/beta domain maps to 22-83 (GTYPNDVYGL…LFWDVYKEHC (62 aa)). Intrachain disulfides connect C35–C58, C44–C63, and C48–C65.

Belongs to the long (3 C-C) scorpion toxin superfamily. As to quaternary structure, monomer (edited version) and heterodimer (non-edited version) of this alpha chain and a beta chain (AC P0CI43). Expressed by the venom gland.

It localises to the secreted. Functionally, the heterodimer non-edited LVP1 induces lipolysis in rat adipocytes. Induction of lipolysis by LVP1 appears to be mediated through the beta-2 adrenergic receptor pathway (ADRB2). In terms of biological role, the edited BmKBTx-like, similar to beta-toxins, may modulate voltage-gated sodium channels (Nav) and may block voltage-gated potassium channels (Kv). The chain is Lipolysis-activating peptide 1-alpha chain from Lychas mucronatus (Chinese swimming scorpion).